Reading from the N-terminus, the 518-residue chain is Cytochrome P450 704C1 (518 aa).

Transmembrane regions (helical) follow at residues 5 to 25 and 299 to 319; these read ILTM…WIAS and VILN…SWFI. Position 461 (cysteine 461) interacts with heme.

This sequence belongs to the cytochrome P450 family. Requires heme as cofactor.

It is found in the membrane. In Pinus taeda (Loblolly pine), this protein is Cytochrome P450 704C1 (CYP704C1).